The chain runs to 327 residues: GMP reductase (327 aa).

Catalysis depends on Cys175, which acts as the Thioimidate intermediate. 204–227 is a binding site for NADP(+); it reads IIADGGIRTPGDIAKSIRFGATMV.

This sequence belongs to the IMPDH/GMPR family. GuaC type 2 subfamily.

The enzyme catalyses IMP + NH4(+) + NADP(+) = GMP + NADPH + 2 H(+). Catalyzes the irreversible NADPH-dependent deamination of GMP to IMP. It functions in the conversion of nucleobase, nucleoside and nucleotide derivatives of G to A nucleotides, and in maintaining the intracellular balance of A and G nucleotides. This chain is GMP reductase, found in Clostridium acetobutylicum (strain ATCC 824 / DSM 792 / JCM 1419 / IAM 19013 / LMG 5710 / NBRC 13948 / NRRL B-527 / VKM B-1787 / 2291 / W).